Reading from the N-terminus, the 20-residue chain is Alpha-1B-glycoprotein (20 aa).

The segment at 1–20 (AVVFDPQPALWAEADTQLEP) is disordered.

As to quaternary structure, interacts with CRISP3. In terms of processing, glycosylated. In terms of tissue distribution, plasma.

The protein resides in the secreted. This Equus asinus (Donkey) protein is Alpha-1B-glycoprotein (A1BG).